The primary structure comprises 415 residues: F-box protein ETP1 (415 aa).

The 46-residue stretch at M1–E46 folds into the F-box domain.

As to quaternary structure, interacts with EIN2 (via C-terminus).

Its function is as follows. Negative regulator of EIN2 protein stability. The sequence is that of F-box protein ETP1 from Arabidopsis thaliana (Mouse-ear cress).